Consider the following 497-residue polypeptide: Putative BTB/POZ domain-containing protein R738 (497 aa).

One can recognise a BTB domain in the interval 16-86; it reads SDCKLVLDDG…FYEKSNVINA (71 aa).

This sequence belongs to the mimivirus BTB/WD family.

This Acanthamoeba polyphaga (Amoeba) protein is Putative BTB/POZ domain-containing protein R738.